Here is a 473-residue protein sequence, read N- to C-terminus: Probable glycine dehydrogenase (decarboxylating) subunit 2 (473 aa).

Lys266 bears the N6-(pyridoxal phosphate)lysine mark.

It belongs to the GcvP family. C-terminal subunit subfamily. The glycine cleavage system is composed of four proteins: P, T, L and H. In this organism, the P 'protein' is a heterodimer of two subunits. Pyridoxal 5'-phosphate serves as cofactor.

It carries out the reaction N(6)-[(R)-lipoyl]-L-lysyl-[glycine-cleavage complex H protein] + glycine + H(+) = N(6)-[(R)-S(8)-aminomethyldihydrolipoyl]-L-lysyl-[glycine-cleavage complex H protein] + CO2. Functionally, the glycine cleavage system catalyzes the degradation of glycine. The P protein binds the alpha-amino group of glycine through its pyridoxal phosphate cofactor; CO(2) is released and the remaining methylamine moiety is then transferred to the lipoamide cofactor of the H protein. This Thermus thermophilus (strain ATCC BAA-163 / DSM 7039 / HB27) protein is Probable glycine dehydrogenase (decarboxylating) subunit 2.